The chain runs to 543 residues: Chaperonin GroEL (543 aa).

Residues 30-33 (TLGP), Lys51, 87-91 (DGTTT), Gly415, 480-482 (NAL), and Asp496 contribute to the ATP site.

It belongs to the chaperonin (HSP60) family. In terms of assembly, forms a cylinder of 14 subunits composed of two heptameric rings stacked back-to-back. Interacts with the co-chaperonin GroES.

It is found in the cytoplasm. It carries out the reaction ATP + H2O + a folded polypeptide = ADP + phosphate + an unfolded polypeptide.. Its function is as follows. Together with its co-chaperonin GroES, plays an essential role in assisting protein folding. The GroEL-GroES system forms a nano-cage that allows encapsulation of the non-native substrate proteins and provides a physical environment optimized to promote and accelerate protein folding. The polypeptide is Chaperonin GroEL (Gemmatimonas aurantiaca (strain DSM 14586 / JCM 11422 / NBRC 100505 / T-27)).